Reading from the N-terminus, the 155-residue chain is MKNNIILVILLGISVFVDCLPLNDQEEDKSLNAQESEVSAVQKRDILQFSGMIRCATGRSAWKYFNYGNWCGWGGSGTAVDGVDSCCRSHDWCYKRHDSCYPKIIPYIASTSGSHPSCSITCHSANNRCQRDVCNCDKVAAECFARNTYHPNNKH.

The signal sequence occupies residues 1–19 (MKNNIILVILLGISVFVDC). The propeptide occupies 20–42 (LPLNDQEEDKSLNAQESEVSAVQ). 6 cysteine pairs are disulfide-bonded: cysteine 55-cysteine 118, cysteine 71-cysteine 87, cysteine 86-cysteine 143, cysteine 93-cysteine 136, cysteine 100-cysteine 129, and cysteine 122-cysteine 134. Ca(2+) contacts are provided by glycine 72 and glycine 74. The active site involves histidine 90. Aspartate 91 is a binding site for Ca(2+). The active site involves aspartate 137.

This sequence belongs to the phospholipase A2 family. Ca(2+) is required as a cofactor.

It is found in the secreted. Its subcellular location is the nematocyst. The enzyme catalyses a 1,2-diacyl-sn-glycero-3-phosphocholine + H2O = a 1-acyl-sn-glycero-3-phosphocholine + a fatty acid + H(+). In terms of biological role, PLA2 catalyzes the calcium-dependent hydrolysis of the 2-acyl groups in 3-sn-phosphoglycerides. This is Phospholipase A2 A2-actitoxin-Ucs2a from Urticina crassicornis (Mottled anemone).